A 469-amino-acid polypeptide reads, in one-letter code: 3-isopropylmalate dehydratase large subunit (469 aa).

Cys350, Cys410, and Cys413 together coordinate [4Fe-4S] cluster.

It belongs to the aconitase/IPM isomerase family. LeuC type 1 subfamily. As to quaternary structure, heterodimer of LeuC and LeuD. It depends on [4Fe-4S] cluster as a cofactor.

The enzyme catalyses (2R,3S)-3-isopropylmalate = (2S)-2-isopropylmalate. It participates in amino-acid biosynthesis; L-leucine biosynthesis; L-leucine from 3-methyl-2-oxobutanoate: step 2/4. Functionally, catalyzes the isomerization between 2-isopropylmalate and 3-isopropylmalate, via the formation of 2-isopropylmaleate. This is 3-isopropylmalate dehydratase large subunit from Brucella abortus (strain S19).